Reading from the N-terminus, the 611-residue chain is Leukotriene A-4 hydrolase (611 aa).

Lysine 73 is modified (N6-acetyllysine). A peptide-binding positions include 135-137 (QCQ) and 267-272 (PYGGME). Histidine 296 contacts Zn(2+). Glutamate 297 acts as the Proton acceptor in catalysis. Positions 300 and 319 each coordinate Zn(2+). Lysine 337 is modified (N6-acetyllysine). Tyrosine 384 (proton donor) is an active-site residue. Residue lysine 414 is modified to N6-acetyllysine. Serine 416 is subject to Phosphoserine. 564-566 (RMK) serves as a coordination point for a peptide. N6-acetyllysine is present on lysine 573.

It belongs to the peptidase M1 family. As to quaternary structure, monomer. Zn(2+) is required as a cofactor. In terms of processing, phosphorylation at Ser-416 inhibits leukotriene-A4 hydrolase activity.

Its subcellular location is the cytoplasm. It carries out the reaction leukotriene A4 + H2O = leukotriene B4. It catalyses the reaction (5S,6S)-epoxy-(18R)-hydroxy-(7E,9E,11Z,14Z,16E)-eicosapentaenoate + H2O = resolvin E1. The enzyme catalyses (5S,6S)-epoxy-(18S)-hydroxy-(7E,9E,11Z,14Z,16E)-eicosapentaenoate + H2O = 18S-resolvin E1. The catalysed reaction is Release of the N-terminal residue from a tripeptide.. The protein operates within lipid metabolism; leukotriene B4 biosynthesis. With respect to regulation, inhibited by bestatin. Inhibited by captopril. The epoxide hydrolase activity is restrained by suicide inactivation that involves binding of LTA4 to Tyr-379. 4-(4-benzylphenyl)thiazol-2-amine (ARM1) selectively inhibits the epoxide hydrolase activity. In terms of biological role, bifunctional zinc metalloenzyme that comprises both epoxide hydrolase (EH) and aminopeptidase activities. Acts as an epoxide hydrolase to catalyze the conversion of LTA4 to the pro-inflammatory mediator leukotriene B4 (LTB4). Also has aminopeptidase activity, with high affinity for N-terminal arginines of various synthetic tripeptides. In addition to its pro-inflammatory EH activity, may also counteract inflammation by its aminopeptidase activity, which inactivates by cleavage another neutrophil attractant, the tripeptide Pro-Gly-Pro (PGP), a bioactive fragment of collagen generated by the action of matrix metalloproteinase-9 (MMP9) and prolylendopeptidase (PREPL). Involved also in the biosynthesis of resolvin E1 and 18S-resolvin E1 from eicosapentaenoic acid, two lipid mediators that show potent anti-inflammatory and pro-resolving actions. The chain is Leukotriene A-4 hydrolase (Lta4h) from Rattus norvegicus (Rat).